The sequence spans 624 residues: Chaperone protein HtpG (624 aa).

An a; substrate-binding region spans residues 1–336; that stretch reads MSMKGQETRG…SNDLPLNVSR (336 aa). Residues 337 to 552 are b; that stretch reads EILQDSRVTQ…ADEMSTQMAK (216 aa). Positions 553-624 are c; the sequence is LFAAAGQQAP…IRRMNQLLTA (72 aa).

This sequence belongs to the heat shock protein 90 family. Homodimer.

The protein resides in the cytoplasm. Functionally, molecular chaperone. Has ATPase activity. The sequence is that of Chaperone protein HtpG from Yersinia enterocolitica serotype O:8 / biotype 1B (strain NCTC 13174 / 8081).